The primary structure comprises 299 residues: Ribosomal protein L11 methyltransferase (299 aa).

Residues Thr-150, Gly-171, Asp-193, and Asn-234 each contribute to the S-adenosyl-L-methionine site.

It belongs to the methyltransferase superfamily. PrmA family.

It localises to the cytoplasm. It carries out the reaction L-lysyl-[protein] + 3 S-adenosyl-L-methionine = N(6),N(6),N(6)-trimethyl-L-lysyl-[protein] + 3 S-adenosyl-L-homocysteine + 3 H(+). Functionally, methylates ribosomal protein L11. The chain is Ribosomal protein L11 methyltransferase from Dictyoglomus turgidum (strain DSM 6724 / Z-1310).